Reading from the N-terminus, the 335-residue chain is N-acetyl-gamma-glutamyl-phosphate reductase (335 aa).

Cysteine 156 is a catalytic residue.

This sequence belongs to the NAGSA dehydrogenase family. Type 1 subfamily.

It localises to the cytoplasm. It catalyses the reaction N-acetyl-L-glutamate 5-semialdehyde + phosphate + NADP(+) = N-acetyl-L-glutamyl 5-phosphate + NADPH + H(+). The protein operates within amino-acid biosynthesis; L-arginine biosynthesis; N(2)-acetyl-L-ornithine from L-glutamate: step 3/4. In terms of biological role, catalyzes the NADPH-dependent reduction of N-acetyl-5-glutamyl phosphate to yield N-acetyl-L-glutamate 5-semialdehyde. The chain is N-acetyl-gamma-glutamyl-phosphate reductase from Aeromonas salmonicida (strain A449).